A 136-amino-acid chain; its full sequence is Large ribosomal subunit protein uL16 (136 aa).

Belongs to the universal ribosomal protein uL16 family. As to quaternary structure, part of the 50S ribosomal subunit.

Its function is as follows. Binds 23S rRNA and is also seen to make contacts with the A and possibly P site tRNAs. In Mannheimia succiniciproducens (strain KCTC 0769BP / MBEL55E), this protein is Large ribosomal subunit protein uL16.